Here is a 361-residue protein sequence, read N- to C-terminus: Tyrosine--tRNA ligase (361 aa).

L-tyrosine-binding residues include Tyr36, Tyr162, Gln166, Asp169, and Gln184. Residues 236–240 (KMSKS) carry the 'KMSKS' region motif. Residue Lys239 coordinates ATP.

This sequence belongs to the class-I aminoacyl-tRNA synthetase family. TyrS type 4 subfamily. In terms of assembly, homodimer.

Its subcellular location is the cytoplasm. It catalyses the reaction tRNA(Tyr) + L-tyrosine + ATP = L-tyrosyl-tRNA(Tyr) + AMP + diphosphate + H(+). Functionally, catalyzes the attachment of tyrosine to tRNA(Tyr) in a two-step reaction: tyrosine is first activated by ATP to form Tyr-AMP and then transferred to the acceptor end of tRNA(Tyr). The polypeptide is Tyrosine--tRNA ligase (Saccharolobus islandicus (strain M.14.25 / Kamchatka #1) (Sulfolobus islandicus)).